Here is a 44-residue protein sequence, read N- to C-terminus: Cuticle protein CP466 (44 aa).

2 repeat units span residues 3–20 (LLEG…KKYL) and 27–44 (VLLT…NVQF).

In terms of tissue distribution, calcified shell.

The polypeptide is Cuticle protein CP466 (Cancer pagurus (Rock crab)).